A 556-amino-acid chain; its full sequence is CTP synthase (556 aa).

Positions 1 to 266 are amidoligase domain; the sequence is MKYIFVTGGV…GKVVEDLLGL (266 aa). S12 is a CTP binding site. UTP is bound at residue S12. Residue 13-18 participates in ATP binding; sequence SLGKGV. L-glutamine is bound at residue Y53. D70 serves as a coordination point for ATP. D70 and E140 together coordinate Mg(2+). CTP-binding positions include 147–149, 187–192, and K223; these read DIE and KTKPTQ. UTP-binding positions include 187–192 and K223; that span reads KTKPTQ. One can recognise a Glutamine amidotransferase type-1 domain in the interval 291–544; that stretch reads TIAIAGKYTE…VKAALRGQSS (254 aa). Residue G356 participates in L-glutamine binding. The Nucleophile; for glutamine hydrolysis role is filled by C383. Residues 384–387, E407, and R467 contribute to the L-glutamine site; that span reads LGMQ. Residues H517 and E519 contribute to the active site.

This sequence belongs to the CTP synthase family. As to quaternary structure, homotetramer.

It carries out the reaction UTP + L-glutamine + ATP + H2O = CTP + L-glutamate + ADP + phosphate + 2 H(+). The catalysed reaction is L-glutamine + H2O = L-glutamate + NH4(+). The enzyme catalyses UTP + NH4(+) + ATP = CTP + ADP + phosphate + 2 H(+). It participates in pyrimidine metabolism; CTP biosynthesis via de novo pathway; CTP from UDP: step 2/2. Allosterically activated by GTP, when glutamine is the substrate; GTP has no effect on the reaction when ammonia is the substrate. The allosteric effector GTP functions by stabilizing the protein conformation that binds the tetrahedral intermediate(s) formed during glutamine hydrolysis. Inhibited by the product CTP, via allosteric rather than competitive inhibition. Functionally, catalyzes the ATP-dependent amination of UTP to CTP with either L-glutamine or ammonia as the source of nitrogen. Regulates intracellular CTP levels through interactions with the four ribonucleotide triphosphates. The protein is CTP synthase of Deinococcus deserti (strain DSM 17065 / CIP 109153 / LMG 22923 / VCD115).